We begin with the raw amino-acid sequence, 483 residues long: ATP synthase subunit beta (483 aa).

162–169 (GGAGVGKT) contributes to the ATP binding site.

It belongs to the ATPase alpha/beta chains family. As to quaternary structure, F-type ATPases have 2 components, CF(1) - the catalytic core - and CF(0) - the membrane proton channel. CF(1) has five subunits: alpha(3), beta(3), gamma(1), delta(1), epsilon(1). CF(0) has four main subunits: a(1), b(1), b'(1) and c(9-12).

The protein resides in the cellular thylakoid membrane. It carries out the reaction ATP + H2O + 4 H(+)(in) = ADP + phosphate + 5 H(+)(out). Produces ATP from ADP in the presence of a proton gradient across the membrane. The catalytic sites are hosted primarily by the beta subunits. This is ATP synthase subunit beta from Rippkaea orientalis (strain PCC 8801 / RF-1) (Cyanothece sp. (strain PCC 8801)).